A 452-amino-acid polypeptide reads, in one-letter code: Chromosomal replication initiator protein DnaA (452 aa).

The segment at Met-1–Gln-80 is domain I, interacts with DnaA modulators. The tract at residues Gln-80–Ser-114 is domain II. The interval Tyr-115–Ala-332 is domain III, AAA+ region. The ATP site is built by Gly-160, Gly-162, Lys-163, and Thr-164. The interval Glu-333–Val-452 is domain IV, binds dsDNA.

Belongs to the DnaA family. Oligomerizes as a right-handed, spiral filament on DNA at oriC.

The protein resides in the cytoplasm. In terms of biological role, plays an essential role in the initiation and regulation of chromosomal replication. ATP-DnaA binds to the origin of replication (oriC) to initiate formation of the DNA replication initiation complex once per cell cycle. Binds the DnaA box (a 9 base pair repeat at the origin) and separates the double-stranded (ds)DNA. Forms a right-handed helical filament on oriC DNA; dsDNA binds to the exterior of the filament while single-stranded (ss)DNA is stabiized in the filament's interior. The ATP-DnaA-oriC complex binds and stabilizes one strand of the AT-rich DNA unwinding element (DUE), permitting loading of DNA polymerase. After initiation quickly degrades to an ADP-DnaA complex that is not apt for DNA replication. Binds acidic phospholipids. The chain is Chromosomal replication initiator protein DnaA from Histophilus somni (strain 129Pt) (Haemophilus somnus).